The following is a 270-amino-acid chain: 4-hydroxy-tetrahydrodipicolinate reductase (270 aa).

NAD(+)-binding positions include 9–14 and glutamate 35; that span reads GAGGRM. Residue arginine 36 coordinates NADP(+). NAD(+) is bound by residues 99 to 101 and 123 to 126; these read GTT and ASNF. The active-site Proton donor/acceptor is histidine 156. Histidine 157 contributes to the (S)-2,3,4,5-tetrahydrodipicolinate binding site. The Proton donor role is filled by lysine 160. Residue 166 to 167 coordinates (S)-2,3,4,5-tetrahydrodipicolinate; the sequence is GT.

This sequence belongs to the DapB family.

The protein localises to the cytoplasm. It carries out the reaction (S)-2,3,4,5-tetrahydrodipicolinate + NAD(+) + H2O = (2S,4S)-4-hydroxy-2,3,4,5-tetrahydrodipicolinate + NADH + H(+). The catalysed reaction is (S)-2,3,4,5-tetrahydrodipicolinate + NADP(+) + H2O = (2S,4S)-4-hydroxy-2,3,4,5-tetrahydrodipicolinate + NADPH + H(+). The protein operates within amino-acid biosynthesis; L-lysine biosynthesis via DAP pathway; (S)-tetrahydrodipicolinate from L-aspartate: step 4/4. Its function is as follows. Catalyzes the conversion of 4-hydroxy-tetrahydrodipicolinate (HTPA) to tetrahydrodipicolinate. This is 4-hydroxy-tetrahydrodipicolinate reductase from Haemophilus influenzae (strain ATCC 51907 / DSM 11121 / KW20 / Rd).